Reading from the N-terminus, the 488-residue chain is F-box protein At3g60790 (488 aa).

A disordered region spans residues 1 to 21 (MTTQSSSSSSSLPSSLSSTPP). The region spanning 49 to 95 (VDRISMLPDEMLQKILSTLSTKDAVITSTLSKRWVDQWKRIPHLCVD) is the F-box domain.

The sequence is that of F-box protein At3g60790 from Arabidopsis thaliana (Mouse-ear cress).